Here is a 418-residue protein sequence, read N- to C-terminus: Magnesium-chelatase subunit ChlI-2, chloroplastic (418 aa).

The N-terminal 55 residues, 1-55, are a transit peptide targeting the chloroplast; the sequence is MASLLGRSPSSILTCPRISSPSSTSSMSHLCFGPEKLSGRIQFNPKKNRSRYHVS. Val-56 is modified (N-acetylvaline). 2 disulfide bridges follow: Cys-96–Cys-187 and Cys-348–Cys-390. 113 to 120 contributes to the ATP binding site; the sequence is GDRGTGKS.

Belongs to the Mg-chelatase subunits D/I family. As to quaternary structure, the magnesium chelatase complex is a heterotrimer consisting of subunits CHLI, CHLD and CHLH. In terms of tissue distribution, expressed in leaves.

It localises to the plastid. The protein localises to the chloroplast. It catalyses the reaction protoporphyrin IX + Mg(2+) + ATP + H2O = Mg-protoporphyrin IX + ADP + phosphate + 3 H(+). Its pathway is porphyrin-containing compound metabolism; chlorophyll biosynthesis. Its activity is regulated as follows. Redox regulation; active in reducing conditions, inactive in oxidizing conditions. Thioredoxins f and m mediate the reversible reductive activation of oxidized CHLI2. In terms of biological role, involved in chlorophyll biosynthesis. Catalyzes the insertion of magnesium ion into protoporphyrin IX to yield Mg-protoporphyrin IX. The reaction takes place in two steps, with an ATP-dependent activation followed by an ATP-dependent chelation step. Possesses low affinity for ATP and may play a limited role in chlorophyll biosynthesis, and contributes to the assembly of the Mg-chelatase complex. The chain is Magnesium-chelatase subunit ChlI-2, chloroplastic (CHLI2) from Arabidopsis thaliana (Mouse-ear cress).